A 486-amino-acid chain; its full sequence is Glutamate--tRNA ligase 2 (486 aa).

The 'HIGH' region motif lies at 12 to 22 (PSPTGELHIGN). Residues 252–256 (KLSKR) carry the 'KMSKS' region motif. Lys255 provides a ligand contact to ATP.

It belongs to the class-I aminoacyl-tRNA synthetase family. Glutamate--tRNA ligase type 1 subfamily. Monomer.

The protein localises to the cytoplasm. It carries out the reaction tRNA(Glu) + L-glutamate + ATP = L-glutamyl-tRNA(Glu) + AMP + diphosphate. Its function is as follows. Catalyzes the attachment of glutamate to tRNA(Glu) in a two-step reaction: glutamate is first activated by ATP to form Glu-AMP and then transferred to the acceptor end of tRNA(Glu). This chain is Glutamate--tRNA ligase 2, found in Syntrophus aciditrophicus (strain SB).